The chain runs to 58 residues: 6.4 kDa protein (58 aa).

The protein is 6.4 kDa protein of Pseudomonas phage Pf3 (Bacteriophage Pf3).